Consider the following 226-residue polypeptide: MKTNLVVLITFTILISLGFWQLSRLKEKKLFLASMQANLTSPAINLAEIQDSLPYHKVKITGQFLPNKDIYLYGRRSMSSGKDGYYLVTPFKTIEDKVILVARGWFSNRNKIIITQATNDRQHEIIGVTMPSEKTRSYLPANDIKNNVWLTLDLKEASQTLELNLEDFYIIAEGKDISNLDILLPLSINHLAAIRNDHLEYALTWFGLAISLIVIYVIYRRNVISV.

A run of 2 helical transmembrane segments spans residues 3–23 (TNLVVLITFTILISLGFWQLS) and 199–219 (LEYALTWFGLAISLIVIYVIY).

The protein belongs to the SURF1 family.

The protein localises to the cell membrane. The sequence is that of SURF1-like protein from Rickettsia felis (strain ATCC VR-1525 / URRWXCal2) (Rickettsia azadi).